The following is a 484-amino-acid chain: Chromosomal replication initiator protein DnaA (484 aa).

The interval 1 to 73 (MQEGKNIWSL…EILTEKGHNT (73 aa)) is domain I, interacts with DnaA modulators. The interval 73–140 (TINVEFINPP…EDIHTKYRNP (68 aa)) is domain II. A domain III, AAA+ region region spans residues 141 to 357 (FLKKKYTFEN…AAVTKLKAHI (217 aa)). Residues glycine 185, glycine 187, lysine 188, and threonine 189 each contribute to the ATP site. Positions 358-484 (DLEDIEIDTS…IELMNKINKN (127 aa)) are domain IV, binds dsDNA.

The protein belongs to the DnaA family. In terms of assembly, oligomerizes as a right-handed, spiral filament on DNA at oriC.

The protein localises to the cytoplasm. Plays an essential role in the initiation and regulation of chromosomal replication. ATP-DnaA binds to the origin of replication (oriC) to initiate formation of the DNA replication initiation complex once per cell cycle. Binds the DnaA box (a 9 base pair repeat at the origin) and separates the double-stranded (ds)DNA. Forms a right-handed helical filament on oriC DNA; dsDNA binds to the exterior of the filament while single-stranded (ss)DNA is stabiized in the filament's interior. The ATP-DnaA-oriC complex binds and stabilizes one strand of the AT-rich DNA unwinding element (DUE), permitting loading of DNA polymerase. After initiation quickly degrades to an ADP-DnaA complex that is not apt for DNA replication. Binds acidic phospholipids. The polypeptide is Chromosomal replication initiator protein DnaA (Borrelia turicatae (strain 91E135)).